A 999-amino-acid chain; its full sequence is Multiple C2 and transmembrane domain-containing protein 1 (999 aa).

The segment covering 1-19 (MEPRAAAAGEPEPPAASSS) has biased composition (low complexity). The segment at 1 to 241 (MEPRAAAAGE…TGEEHGSSQK (241 aa)) is disordered. The segment covering 34 to 44 (RSKGGGGGRAG) has biased composition (gly residues). A compositionally biased stretch (low complexity) spans 65-79 (GNAPARGSGAGSRWS). Polar residues predominate over residues 92–101 (FSSSQPNLCC). Low complexity-rich tracts occupy residues 131–141 (PAVKGPAAASG) and 149–169 (GGRSPDSAPSSSSASSSLSSS). Basic and acidic residues-rich tracts occupy residues 175–185 (RGDRARDEGAR) and 228–238 (RAPETGEEHGS). C2 domains lie at 242-360 (IINT…DVTL), 452-569 (QTQS…KLEL), and 603-724 (QKER…AYVL). Ca(2+) contacts are provided by Asp-277, Asp-283, Asp-330, Asp-332, Asp-338, Asp-486, Asp-492, Asp-539, Asp-541, Asp-547, Asp-642, Asp-648, Asp-694, Asp-696, and Asp-702. 2 helical membrane-spanning segments follow: residues 811-831 (FVLFLFVVWNFELYMIPLVLL) and 914-934 (PFLSWLAIVALCVFTAILYCI).

It belongs to the MCTP family. Ca(2+) is required as a cofactor.

It localises to the cytoplasmic vesicle. The protein resides in the secretory vesicle. Its subcellular location is the synaptic vesicle membrane. The protein localises to the recycling endosome. It is found in the endoplasmic reticulum membrane. In terms of biological role, calcium sensor which is essential for the stabilization of normal baseline neurotransmitter release and for the induction and long-term maintenance of presynaptic homeostatic plasticity. This chain is Multiple C2 and transmembrane domain-containing protein 1 (MCTP1), found in Homo sapiens (Human).